The following is a 171-amino-acid chain: Voltage-dependent P/Q-type calcium channel subunit alpha-1A (171 aa).

Residues 1-11 (FVTVLGSITDI) form a helical membrane-spanning segment. Residues 1 to 171 (FVTVLGSITD…LMLNLFVAVI (171 aa)) form an IV repeat. At 12–18 (LVTEFGN) the chain is on the extracellular side. Residues 19–37 (NFINLSFLRLFRAARLIKL) form a helical membrane-spanning segment. Residues 38-56 (LRQGYTIRILLWTFVQSFK) lie on the Cytoplasmic side of the membrane. Residues 57–76 (ALPYVCLLIAMLFFIYAIIG) form a helical membrane-spanning segment. The Extracellular segment spans residues 77–143 (MQVFGNIGIE…ENSGIKEDEC (67 aa)). A helical transmembrane segment spans residues 144-168 (GNEFAYFYFVSFIFLCSFLMLNLFV). Over 169 to 171 (AVI) the chain is Cytoplasmic.

The protein belongs to the calcium channel alpha-1 subunit (TC 1.A.1.11) family. CACNA1A subfamily. In terms of assembly, voltage-dependent calcium channels are multisubunit complexes, consisting of alpha-1, alpha-2, beta and delta subunits in a 1:1:1:1 ratio. The channel activity is directed by the pore-forming and voltage-sensitive alpha-1 subunit. In many cases, this subunit is sufficient to generate voltage-sensitive calcium channel activity. The auxiliary subunits beta and alpha-2/delta linked by a disulfide bridge regulate the channel activity.

The protein localises to the cell membrane. The catalysed reaction is Ca(2+)(in) = Ca(2+)(out). The isoform alpha-1A gives rise to P and/or Q-type calcium currents. P/Q-type calcium channels belong to the 'high-voltage activated' (HVA) group. The sequence is that of Voltage-dependent P/Q-type calcium channel subunit alpha-1A (CACNA1A) from Gallus gallus (Chicken).